A 584-amino-acid chain; its full sequence is Arginine--tRNA ligase (584 aa).

The 'HIGH' region signature appears at 127–137 (PNTNKPLHVGH).

This sequence belongs to the class-I aminoacyl-tRNA synthetase family. Monomer.

It localises to the cytoplasm. It carries out the reaction tRNA(Arg) + L-arginine + ATP = L-arginyl-tRNA(Arg) + AMP + diphosphate. In Borrelia turicatae (strain 91E135), this protein is Arginine--tRNA ligase.